The sequence spans 290 residues: Bifunctional protein FolD (290 aa).

Residues 174–176 (GHS), Ile199, and Ile240 each bind NADP(+).

Belongs to the tetrahydrofolate dehydrogenase/cyclohydrolase family. Homodimer.

It catalyses the reaction (6R)-5,10-methylene-5,6,7,8-tetrahydrofolate + NADP(+) = (6R)-5,10-methenyltetrahydrofolate + NADPH. The enzyme catalyses (6R)-5,10-methenyltetrahydrofolate + H2O = (6R)-10-formyltetrahydrofolate + H(+). Its pathway is one-carbon metabolism; tetrahydrofolate interconversion. Its function is as follows. Catalyzes the oxidation of 5,10-methylenetetrahydrofolate to 5,10-methenyltetrahydrofolate and then the hydrolysis of 5,10-methenyltetrahydrofolate to 10-formyltetrahydrofolate. The sequence is that of Bifunctional protein FolD from Methanosarcina acetivorans (strain ATCC 35395 / DSM 2834 / JCM 12185 / C2A).